Consider the following 408-residue polypeptide: Tyrosine--tRNA ligase (408 aa).

The 'HIGH' region signature appears at 46 to 55 (PTAPDLHVGH). The 'KMSKS' region signature appears at 230 to 234 (KMSKS). Residue Lys-233 participates in ATP binding. One can recognise an S4 RNA-binding domain in the interval 343–404 (VWICRLLTDA…GKRRFARIKF (62 aa)).

Belongs to the class-I aminoacyl-tRNA synthetase family. TyrS type 2 subfamily. As to quaternary structure, homodimer.

The protein resides in the cytoplasm. It catalyses the reaction tRNA(Tyr) + L-tyrosine + ATP = L-tyrosyl-tRNA(Tyr) + AMP + diphosphate + H(+). Its function is as follows. Catalyzes the attachment of tyrosine to tRNA(Tyr) in a two-step reaction: tyrosine is first activated by ATP to form Tyr-AMP and then transferred to the acceptor end of tRNA(Tyr). This is Tyrosine--tRNA ligase from Syntrophotalea carbinolica (strain DSM 2380 / NBRC 103641 / GraBd1) (Pelobacter carbinolicus).